The chain runs to 204 residues: MGAYRYMQELYRKKQSDVMRYLLRIRVWQYRQLTKLHRSPRPTRPDKARRLGYRAKQGFVIYRIRVRRGGRKRPVPKGCTYGKPKSHGVNQLKPYRGLQSIAEERVGRRLGGLRVLNSYWIAQDASYKYFEVILIDTHHSAIRRDPKINWICKHVHKHRELRGLTSAGKSSRGIGKGYRYSQTIGGSRRAAWKRKNREHMHRKR.

The disordered stretch occupies residues 185–204 (GGSRRAAWKRKNREHMHRKR). Over residues 190–204 (AAWKRKNREHMHRKR) the composition is skewed to basic residues.

Belongs to the eukaryotic ribosomal protein eL15 family.

In Drosophila melanogaster (Fruit fly), this protein is Large ribosomal subunit protein eL15 (RpL15).